The chain runs to 150 residues: Regulatory protein RecX (150 aa).

It belongs to the RecX family.

The protein localises to the cytoplasm. Functionally, modulates RecA activity. The polypeptide is Regulatory protein RecX (Acidithiobacillus ferrooxidans (strain ATCC 23270 / DSM 14882 / CIP 104768 / NCIMB 8455) (Ferrobacillus ferrooxidans (strain ATCC 23270))).